We begin with the raw amino-acid sequence, 488 residues long: Cruciferin (488 aa).

The signal sequence occupies residues 1-23; the sequence is MARLSSLLSFSLALLTFLHGSTA. 2 cysteine pairs are disulfide-bonded: C30–C63 and C105–C305. Cupin type-1 domains lie at 35-262 and 311-460; these read LNAL…RTAQ and DNLD…EEAR. The segment at 116 to 163 is disordered; sequence QPSGGSPFGEGQGQGQQGQGQGHQGQGQGQQGQQGQQGQQSQGQGFRD. A compositionally biased stretch (gly residues) spans 121–147; it reads SPFGEGQGQGQQGQGQGHQGQGQGQQG. Over residues 148-160 the composition is skewed to low complexity; that stretch reads QQGQQGQQSQGQG.

This sequence belongs to the 11S seed storage protein (globulins) family. Hexamer; each subunit is composed of an acidic and a basic chain derived from a single precursor and linked by a disulfide bond.

The protein localises to the rough endoplasmic reticulum. In terms of biological role, this is a seed storage protein. In Brassica napus (Rape), this protein is Cruciferin (CRUA).